Here is a 334-residue protein sequence, read N- to C-terminus: ADP-L-glycero-D-manno-heptose-6-epimerase (334 aa).

NADP(+) is bound by residues 11-12 (FI), 32-33 (DN), lysine 39, lysine 54, 77-81 (QGACS), and asparagine 94. The active-site Proton acceptor is tyrosine 141. Residue lysine 145 participates in NADP(+) binding. Position 171 (asparagine 171) interacts with substrate. The NADP(+) site is built by valine 172 and lysine 180. The active-site Proton acceptor is lysine 180. Substrate contacts are provided by residues arginine 182, histidine 189, 203-206 (FGSN), arginine 216, and tyrosine 295.

This sequence belongs to the NAD(P)-dependent epimerase/dehydratase family. HldD subfamily. As to quaternary structure, homopentamer. NADP(+) serves as cofactor.

The catalysed reaction is ADP-D-glycero-beta-D-manno-heptose = ADP-L-glycero-beta-D-manno-heptose. The protein operates within nucleotide-sugar biosynthesis; ADP-L-glycero-beta-D-manno-heptose biosynthesis; ADP-L-glycero-beta-D-manno-heptose from D-glycero-beta-D-manno-heptose 7-phosphate: step 4/4. Its function is as follows. Catalyzes the interconversion between ADP-D-glycero-beta-D-manno-heptose and ADP-L-glycero-beta-D-manno-heptose via an epimerization at carbon 6 of the heptose. The protein is ADP-L-glycero-D-manno-heptose-6-epimerase of Neisseria gonorrhoeae (strain ATCC 700825 / FA 1090).